Here is a 307-residue protein sequence, read N- to C-terminus: Ribonuclease Z (307 aa).

Positions 61, 63, 65, 66, 138, 207, and 265 each coordinate Zn(2+). Asp-65 serves as the catalytic Proton acceptor.

Belongs to the RNase Z family. Homodimer. It depends on Zn(2+) as a cofactor.

It catalyses the reaction Endonucleolytic cleavage of RNA, removing extra 3' nucleotides from tRNA precursor, generating 3' termini of tRNAs. A 3'-hydroxy group is left at the tRNA terminus and a 5'-phosphoryl group is left at the trailer molecule.. Its function is as follows. Zinc phosphodiesterase, which displays some tRNA 3'-processing endonuclease activity. Probably involved in tRNA maturation, by removing a 3'-trailer from precursor tRNA. The chain is Ribonuclease Z from Methanothermobacter thermautotrophicus (strain ATCC 29096 / DSM 1053 / JCM 10044 / NBRC 100330 / Delta H) (Methanobacterium thermoautotrophicum).